The sequence spans 260 residues: Indole-3-glycerol phosphate synthase (260 aa).

It belongs to the TrpC family.

It carries out the reaction 1-(2-carboxyphenylamino)-1-deoxy-D-ribulose 5-phosphate + H(+) = (1S,2R)-1-C-(indol-3-yl)glycerol 3-phosphate + CO2 + H2O. Its pathway is amino-acid biosynthesis; L-tryptophan biosynthesis; L-tryptophan from chorismate: step 4/5. The polypeptide is Indole-3-glycerol phosphate synthase (Staphylococcus aureus (strain MRSA252)).